The sequence spans 149 residues: Large ribosomal subunit protein bL9 (149 aa).

It belongs to the bacterial ribosomal protein bL9 family.

In terms of biological role, binds to the 23S rRNA. The chain is Large ribosomal subunit protein bL9 from Geobacillus thermodenitrificans (strain NG80-2).